The primary structure comprises 421 residues: NADH-dependent phenylglyoxylate dehydrogenase subunit epsilon (421 aa).

FAD contacts are provided by residues 15 to 18 (SSHA), 39 to 40 (TR), and 279 to 297 (ATAQARGFFTGTKVMNAIL).

Belongs to the FAD-dependent oxidoreductase family. As to quaternary structure, dimer of heteropentamers composed of an alpha (PadG), a beta (PadI), a gamma (PadE), a delta (PadF) and an epsilon (PadH) subunit. The cofactor is FAD.

The catalysed reaction is phenylglyoxylate + NAD(+) + CoA = benzoyl-CoA + CO2 + NADH. Its activity is regulated as follows. Activated by magnesium ions and thiamine diphosphate. Its function is as follows. Involved in the anaerobic metabolism of phenylalanine and phenylacetate. Catalyzes the oxidative decarboxylation of phenylglyoxylate to benzoyl-CoA and CO(2). It can also react slowly with 2-oxo-3-methylbutanoate and use different electron acceptors such as benzyl viologen, methyl viologen, FAD or FMN, but NAD seems to be the physiological electron acceptor. Also catalyzes an isotope exchange between CO(2) and the carboxyl group which proves partial or complete reversibility of the oxidative decarboxylation reaction. This is NADH-dependent phenylglyoxylate dehydrogenase subunit epsilon (padH) from Aromatoleum evansii (Azoarcus evansii).